We begin with the raw amino-acid sequence, 50 residues long: Large ribosomal subunit protein bL33 (50 aa).

This sequence belongs to the bacterial ribosomal protein bL33 family.

The chain is Large ribosomal subunit protein bL33 from Hydrogenovibrio crunogenus (strain DSM 25203 / XCL-2) (Thiomicrospira crunogena).